We begin with the raw amino-acid sequence, 32 residues long: Photosystem II reaction center protein T (32 aa).

Residues 3-23 (ALVYTFLLIGTLMVIFFAVFF) traverse the membrane as a helical segment.

The protein belongs to the PsbT family. In terms of assembly, PSII is composed of 1 copy each of membrane proteins PsbA, PsbB, PsbC, PsbD, PsbE, PsbF, PsbH, PsbI, PsbJ, PsbK, PsbL, PsbM, PsbT, PsbX, PsbY, PsbZ, Psb30/Ycf12, at least 3 peripheral proteins of the oxygen-evolving complex and a large number of cofactors. It forms dimeric complexes.

The protein localises to the plastid. It localises to the chloroplast thylakoid membrane. In terms of biological role, found at the monomer-monomer interface of the photosystem II (PS II) dimer, plays a role in assembly and dimerization of PSII. PSII is a light-driven water plastoquinone oxidoreductase, using light energy to abstract electrons from H(2)O, generating a proton gradient subsequently used for ATP formation. This Trieres chinensis (Marine centric diatom) protein is Photosystem II reaction center protein T.